A 388-amino-acid polypeptide reads, in one-letter code: Chorismate synthase (388 aa).

NADP(+)-binding residues include arginine 39 and arginine 45. FMN contacts are provided by residues 130-132, 251-252, glycine 296, 311-315, and arginine 337; these read RSS, NA, and KPIPT.

This sequence belongs to the chorismate synthase family. Homotetramer. The cofactor is FMNH2.

It catalyses the reaction 5-O-(1-carboxyvinyl)-3-phosphoshikimate = chorismate + phosphate. It participates in metabolic intermediate biosynthesis; chorismate biosynthesis; chorismate from D-erythrose 4-phosphate and phosphoenolpyruvate: step 7/7. In terms of biological role, catalyzes the anti-1,4-elimination of the C-3 phosphate and the C-6 proR hydrogen from 5-enolpyruvylshikimate-3-phosphate (EPSP) to yield chorismate, which is the branch point compound that serves as the starting substrate for the three terminal pathways of aromatic amino acid biosynthesis. This reaction introduces a second double bond into the aromatic ring system. This is Chorismate synthase from Streptococcus agalactiae serotype III (strain NEM316).